Consider the following 371-residue polypeptide: Pyruvate dehydrogenase E1 component subunit alpha (371 aa).

As to quaternary structure, heterodimer of an alpha and a beta chain. Thiamine diphosphate serves as cofactor.

It carries out the reaction N(6)-[(R)-lipoyl]-L-lysyl-[protein] + pyruvate + H(+) = N(6)-[(R)-S(8)-acetyldihydrolipoyl]-L-lysyl-[protein] + CO2. The pyruvate dehydrogenase complex catalyzes the overall conversion of pyruvate to acetyl-CoA and CO(2). It contains multiple copies of three enzymatic components: pyruvate dehydrogenase (E1), dihydrolipoamide acetyltransferase (E2) and lipoamide dehydrogenase (E3). The polypeptide is Pyruvate dehydrogenase E1 component subunit alpha (Bacillus cereus).